A 241-amino-acid chain; its full sequence is tRNA pseudouridine synthase A (241 aa).

Asp52 serves as the catalytic Nucleophile. Tyr111 provides a ligand contact to substrate.

This sequence belongs to the tRNA pseudouridine synthase TruA family. In terms of assembly, homodimer.

It catalyses the reaction uridine(38/39/40) in tRNA = pseudouridine(38/39/40) in tRNA. Functionally, formation of pseudouridine at positions 38, 39 and 40 in the anticodon stem and loop of transfer RNAs. In Ureaplasma parvum serovar 3 (strain ATCC 27815 / 27 / NCTC 11736), this protein is tRNA pseudouridine synthase A.